The primary structure comprises 218 residues: Trichothecene biosynthesis transcription regulator TRI6 (218 aa).

A disordered region spans residues 154 to 181 (SQSTNDPGDAGKKGFATRKDRARHEAKH). Positions 162–176 (DAGKKGFATRKDRAR) are enriched in basic and acidic residues. A C2H2-type zinc finger spans residues 185-215 (IRCQWRDNNGDQCTRTFSRMDNMRDHFRRIH).

It localises to the nucleus. Functionally, transcriptional activator of part of the trichothecene biosynthesis cluster that mediates the production of the antimicrobial trichothecene harzianum A (HA) that plays a role in Botrytis cinerea antagonistic activity and plant defense priming. Regulates expression of both trichothecene and mevalonate pathway genes. This is Trichothecene biosynthesis transcription regulator TRI6 from Trichoderma arundinaceum.